Reading from the N-terminus, the 272-residue chain is 3-hydroxyanthranilate 3,4-dioxygenase (272 aa).

Positions 1 to 154 (MMEWIDENSS…SEEHKTGKPS (154 aa)) are domain A (catalytic). O2 is bound at residue Arg38. Residues His42, Glu48, and His86 each coordinate Fe cation. Glu48 contributes to the substrate binding site. The substrate site is built by Arg90 and Glu100. The segment at 155 to 169 (KESSCSINVDTETEL) is linker. Positions 170-272 (MEPFPLKQWL…SITVDSLANK (103 aa)) are domain B.

The protein belongs to the 3-HAO family. The cofactor is Fe(2+).

The protein resides in the cytoplasm. The catalysed reaction is 3-hydroxyanthranilate + O2 = (2Z,4Z)-2-amino-3-carboxymuconate 6-semialdehyde. The protein operates within cofactor biosynthesis; NAD(+) biosynthesis; quinolinate from L-kynurenine: step 3/3. Its function is as follows. Catalyzes the oxidative ring opening of 3-hydroxyanthranilate to 2-amino-3-carboxymuconate semialdehyde, which spontaneously cyclizes to quinolinate. This Nematostella vectensis (Starlet sea anemone) protein is 3-hydroxyanthranilate 3,4-dioxygenase.